Consider the following 432-residue polypeptide: Gamma-glutamyl phosphate reductase (432 aa).

The protein belongs to the gamma-glutamyl phosphate reductase family.

Its subcellular location is the cytoplasm. The enzyme catalyses L-glutamate 5-semialdehyde + phosphate + NADP(+) = L-glutamyl 5-phosphate + NADPH + H(+). It participates in amino-acid biosynthesis; L-proline biosynthesis; L-glutamate 5-semialdehyde from L-glutamate: step 2/2. Its function is as follows. Catalyzes the NADPH-dependent reduction of L-glutamate 5-phosphate into L-glutamate 5-semialdehyde and phosphate. The product spontaneously undergoes cyclization to form 1-pyrroline-5-carboxylate. The sequence is that of Gamma-glutamyl phosphate reductase from Corynebacterium glutamicum (strain R).